Reading from the N-terminus, the 397-residue chain is MSLRSCSTEMIPEFTVTEITDLVRQVMHDTFYCIKIRGEISGLSRPSSGHVYLSLKDDNSVISAVCWHGTRLDVQFENGLEVICTGHISTYQSRYQLVIEGMVLAGQGKLAAMLEERRKKLEKEGLFDQARKKPLPLLPLKIGVITSPTGAVIRDILNRVKHRFPSHIIVWPVQVQGSQASAMVVQAILGFNNLEEPPDVIIVARGGGSIEDLWPFNDEELARTAAASKIPIVSAIGHETDFTIIDYAADVRAPTPTAAVEIVLPERQQLVSDIAHKLSKIRSAVRNVLGAKEHRLLQLYGVLTETKHKISEVGRSALAHQEKIEFLFKVALLKKQQYLDNLIGRIDRYNKEHIISVGYAVIYDNTGQHVSSANAVAPDDTIVIEWKDGKRRAAILT.

Belongs to the XseA family. As to quaternary structure, heterooligomer composed of large and small subunits.

The protein localises to the cytoplasm. It catalyses the reaction Exonucleolytic cleavage in either 5'- to 3'- or 3'- to 5'-direction to yield nucleoside 5'-phosphates.. Bidirectionally degrades single-stranded DNA into large acid-insoluble oligonucleotides, which are then degraded further into small acid-soluble oligonucleotides. The chain is Exodeoxyribonuclease 7 large subunit from Anaplasma marginale (strain Florida).